The primary structure comprises 152 residues: Transcriptional repressor NrdR (152 aa).

A zinc finger spans residues 3-34 (CPYCNASETKVIDSRLAAEGAQVRRRRSCNSC). In terms of domain architecture, ATP-cone spans 49 to 139 (PRIIKSSGKI…VYRDFQDIDA (91 aa)).

This sequence belongs to the NrdR family. It depends on Zn(2+) as a cofactor.

Functionally, negatively regulates transcription of bacterial ribonucleotide reductase nrd genes and operons by binding to NrdR-boxes. The sequence is that of Transcriptional repressor NrdR from Psychrobacter cryohalolentis (strain ATCC BAA-1226 / DSM 17306 / VKM B-2378 / K5).